We begin with the raw amino-acid sequence, 321 residues long: Beta-porphyranase B (321 aa).

Positions 1–20 are cleaved as a signal peptide; the sequence is MRKTVLYLSAASLFLSSYTL. In terms of domain architecture, GH16 spans 31-319; it reads EHIKNLPEAP…WVRAYKLVPI (289 aa). Residues Trp72, Arg76, Glu173, Glu178, and Glu284 each coordinate substrate. Glu173 functions as the Nucleophile in the catalytic mechanism. Residue Glu178 is the Proton donor of the active site.

This sequence belongs to the glycosyl hydrolase 16 family.

The enzyme catalyses Hydrolysis of beta-D-galactopyranose-(1-&gt;4)-alpha-L-galactopyranose-6-sulfate linkages in porphyran.. Cleaves the sulfated polysaccharide porphyran at the (1-&gt;4) linkages between beta-D-galactopyranose and alpha-L-galactopyranose-6-sulfate, forming mostly the disaccharide alpha-L-galactopyranose-6-sulfate-(1-&gt;3)-beta-D-galactose. Some longer oligosaccharides of even number of residues are also observed. Inactive on the non-sulfated agarose portion of the porphyran backbone. The protein is Beta-porphyranase B of Phocaeicola plebeius (strain DSM 17135 / JCM 12973 / CCUG 54634 / M2) (Bacteroides plebeius).